The following is a 416-amino-acid chain: Photosystem II stability/assembly factor HCF136, chloroplastic (416 aa).

A chloroplast-targeting transit peptide spans 1–36 (MATTASLHLHLHLLLSSSRRRCRLLVPRAHTDSIST). The N-terminal 31 residues, 37 to 67 (GRRRFIADTATASAAAAVGPLVLPRTPLARA), are a transit peptide targeting the thylakoid.

Belongs to the Ycf48 family.

It localises to the plastid. The protein localises to the chloroplast thylakoid lumen. In terms of biological role, essential for photosystem II (PSII) biogenesis; required for assembly of an early intermediate in PSII assembly that includes D2 (psbD) and cytochrome b559. The protein is Photosystem II stability/assembly factor HCF136, chloroplastic (HCF136) of Oryza sativa subsp. japonica (Rice).